The chain runs to 306 residues: Ribosomal RNA small subunit methyltransferase H (306 aa).

S-adenosyl-L-methionine contacts are provided by residues 37–39 (GGH), aspartate 56, aspartate 102, and glutamine 109.

It belongs to the methyltransferase superfamily. RsmH family.

It localises to the cytoplasm. It catalyses the reaction cytidine(1402) in 16S rRNA + S-adenosyl-L-methionine = N(4)-methylcytidine(1402) in 16S rRNA + S-adenosyl-L-homocysteine + H(+). Functionally, specifically methylates the N4 position of cytidine in position 1402 (C1402) of 16S rRNA. The protein is Ribosomal RNA small subunit methyltransferase H of Nautilia profundicola (strain ATCC BAA-1463 / DSM 18972 / AmH).